Consider the following 224-residue polypeptide: Putative MgpC-like protein MPN_150 (224 aa).

It belongs to the MgpC family.

This is Putative MgpC-like protein MPN_150 from Mycoplasma pneumoniae (strain ATCC 29342 / M129 / Subtype 1) (Mycoplasmoides pneumoniae).